Consider the following 162-residue polypeptide: Regulator of ribonuclease activity A (162 aa).

This sequence belongs to the RraA family. As to quaternary structure, homotrimer. Binds to both RNA-binding sites in the C-terminal region of Rne and to RhlB.

Its subcellular location is the cytoplasm. In terms of biological role, globally modulates RNA abundance by binding to RNase E (Rne) and regulating its endonucleolytic activity. Can modulate Rne action in a substrate-dependent manner by altering the composition of the degradosome. Modulates RNA-binding and helicase activities of the degradosome. In Haemophilus influenzae (strain 86-028NP), this protein is Regulator of ribonuclease activity A.